A 215-amino-acid polypeptide reads, in one-letter code: Cytidylate kinase (215 aa).

Residue 10–18 coordinates ATP; sequence GPAASGKGT.

It belongs to the cytidylate kinase family. Type 1 subfamily.

It is found in the cytoplasm. The catalysed reaction is CMP + ATP = CDP + ADP. It carries out the reaction dCMP + ATP = dCDP + ADP. The protein is Cytidylate kinase of Bartonella quintana (strain Toulouse) (Rochalimaea quintana).